Reading from the N-terminus, the 566-residue chain is MTILPKKKPPPPDADPANEPPPPGPLPPAPRRGGGVGVGGGGTGVGGGERDRDSGVVGARPRASPPPQGPLPGPPGALHRWALAVPPGAVAGPRPQQASPPPCGGPGGPGGGPGDALGATTAGVGAAGVVVGVGGPVGVGGCCSGPGHSKRRRQAPGVGAVGGASPEREEVGAGYNSEDEYEAAAARIEAMDPATVEQQEHWFEKALRDKKGFIIKQMKEDGACLFRAVADQVYGDQDMHEVVRKHCMDYLMKNADYFSNYVTEDFTTYINRKRKNNCHGNHIEMQAMAEMYNRPVEVYQYSTEPINTFHGIHQNEDEPIRVSYHRNIHYNSVVNPNKATIGVGLGLPSFKPGFAEQSLMKNAIKTSEESWIEQQMLEDKKRATDWEATNEAIEEQVARESYLQWLRDQEKQARQVRGPSQPRKASATCSSATAAASSGLEEWTSRSPRQRSSASSPEHPELHAELGIKPPSPGTVLALAKPPSPCAPGTSSQFSAGADRATSPLVSLYPALECRALIQQMSPSAFGLNDWDDDEILASVLAVSQQEYLDSMKKNKVHRDPPPDKS.

Disordered regions lie at residues 1-117 (MTIL…GDAL) and 146-175 (PGHS…GAGY). Over residues 11–30 (PPDADPANEPPPPGPLPPAP) the composition is skewed to pro residues. The span at 32-47 (RGGGVGVGGGGTGVGG) shows a compositional bias: gly residues. A compositionally biased stretch (pro residues) spans 63-75 (ASPPPQGPLPGPP). The residue at position 64 (Ser64) is a Phosphoserine. Residues 84-97 (AVPPGAVAGPRPQQ) show a composition bias toward low complexity. Residues 105–115 (GPGGPGGGPGD) show a composition bias toward gly residues. Residue Ser165 is modified to Phosphoserine. Phosphotyrosine is present on Tyr175. Residue Ser177 is modified to Phosphoserine. Phosphothreonine is present on Thr195. An OTU domain is found at 213 to 336 (FIIKQMKEDG…NIHYNSVVNP (124 aa)). The cys-loop stretch occupies residues 218–224 (MKEDGAC). The active site involves Asp221. Cys224 serves as the catalytic Nucleophile. The segment at 273 to 283 (KRKNNCHGNHI) is variable-loop. At Ser323 the chain carries Phosphoserine. A his-loop region spans residues 324-329 (YHRNIH). His329 is an active-site residue. Residues Ser332 and Ser370 each carry the phosphoserine modification. The disordered stretch occupies residues 413–497 (ARQVRGPSQP…PGTSSQFSAG (85 aa)). Low complexity-rich tracts occupy residues 425–438 (ASAT…AASS) and 445–457 (SRSP…ASSP). Position 447 is a phosphoserine (Ser447). Thr502 is subject to Phosphothreonine. The residue at position 503 (Ser503) is a Phosphoserine.

The protein belongs to the peptidase C85 family. Interacts with TRAF3. Phosphorylation at Ser-177 is required for deubiquitinating activity. Phosphorylation at Ser-323, Ser-332 and Ser-503 by MTOR promotes its activity.

It is found in the nucleus. The enzyme catalyses Thiol-dependent hydrolysis of ester, thioester, amide, peptide and isopeptide bonds formed by the C-terminal Gly of ubiquitin (a 76-residue protein attached to proteins as an intracellular targeting signal).. Inhibited by N-ethyl-maleimide (NEM). Deubiquitinating enzyme that functions as a negative regulator of the innate immune system. Has peptidase activity towards 'Lys-48'- and 'Lys-63'-linked polyubiquitin chains. Can also cleave 'Lys-11'-linked ubiquitin chains (in vitro). Acts via TRAF3 deubiquitination and subsequent suppression of type I interferon (IFN) production. Controls neuroectodermal differentiation through cleaving 'Lys-48'-linked ubiquitin chains to counteract degradation of select chromatin regulators such as ARID1A, HDAC2 and HCF1. Acts as a positive regulator of mTORC1 and mTORC2 signaling following phosphorylation by MTOR: acts by mediating deubiquitination of BTRC, leading to its stability. This Rattus norvegicus (Rat) protein is OTU domain-containing protein 5.